A 568-amino-acid polypeptide reads, in one-letter code: Oxygen-dependent choline dehydrogenase (568 aa).

6-35 provides a ligand contact to FAD; it reads DYIIVGAGSAGCVLADRLSASGEHYILLLE. The Proton acceptor role is filled by His-470.

It belongs to the GMC oxidoreductase family. FAD serves as cofactor.

It carries out the reaction choline + A = betaine aldehyde + AH2. It catalyses the reaction betaine aldehyde + NAD(+) + H2O = glycine betaine + NADH + 2 H(+). Its pathway is amine and polyamine biosynthesis; betaine biosynthesis via choline pathway; betaine aldehyde from choline (cytochrome c reductase route): step 1/1. In terms of biological role, involved in the biosynthesis of the osmoprotectant glycine betaine. Catalyzes the oxidation of choline to betaine aldehyde and betaine aldehyde to glycine betaine at the same rate. This is Oxygen-dependent choline dehydrogenase from Photobacterium profundum (strain SS9).